We begin with the raw amino-acid sequence, 1228 residues long: Myosin-1 (1228 aa).

Residues 1 to 27 (MAVTKRAGRRAQGGTQPAKGAQGVKKA) are disordered. One can recognise a Myosin motor domain in the interval 37–716 (VGVSDLTLLS…TLFALEHMRD (680 aa)). An ATP-binding site is contributed by 130–137 (GESGAGKT). A Phosphoserine modification is found at serine 358. The actin-binding stretch occupies residues 405-487 (TIGILDIYGF…PGIFAALNDA (83 aa)). IQ domains follow at residues 720–740 (HNMA…KTEC) and 741–768 (AIKI…SGHK). The 187-residue stretch at 776–962 (RRTYSLIGYR…SGSVQVPPGA (187 aa)) folds into the TH1 domain. Disordered regions lie at residues 953 to 1040 (SGSV…AESA), 1053 to 1109 (QSLV…PAAP), and 1169 to 1228 (QGGA…DDDW). Positions 1053–1063 (QSLVNPRSGQG) are enriched in polar residues. Low complexity predominate over residues 1064 to 1092 (QQQQQHHQAYQQPTAAQPAATSYSPAPAK). Positions 1093 to 1106 (AAPPPPPPAPPAAP) are enriched in pro residues. Residues 1109–1170 (PAEPTYKALY…PAAYLEEVQG (62 aa)) enclose the SH3 domain. Positions 1180 to 1194 (PTAGGASAGASLAEA) are enriched in low complexity.

Belongs to the TRAFAC class myosin-kinesin ATPase superfamily. Myosin family. In terms of processing, phosphorylation of the TEDS site (Ser-358) is required for the polarization of the actin cytoskeleton. Phosphorylation probably activates the myosin-I ATPase activity.

It localises to the cytoplasm. The protein localises to the cytoskeleton. The protein resides in the actin patch. Functionally, type-I myosin implicated in the organization of the actin cytoskeleton. Required for proper actin cytoskeleton polarization. At the cell cortex, assembles in patch-like structures together with proteins from the actin-polymerizing machinery and promotes actin assembly. Functions as actin nucleation-promoting factor (NPF) for the Arp2/3 complex. In Yarrowia lipolytica (strain CLIB 122 / E 150) (Yeast), this protein is Myosin-1 (MYO1).